A 718-amino-acid chain; its full sequence is Ribosomal RNA large subunit methyltransferase K/L (718 aa).

In terms of domain architecture, THUMP spans 44-155 (DAYKVCIYSY…KQFVNVFLCL (112 aa)).

This sequence belongs to the methyltransferase superfamily. RlmKL family.

It is found in the cytoplasm. It carries out the reaction guanosine(2445) in 23S rRNA + S-adenosyl-L-methionine = N(2)-methylguanosine(2445) in 23S rRNA + S-adenosyl-L-homocysteine + H(+). The enzyme catalyses guanosine(2069) in 23S rRNA + S-adenosyl-L-methionine = N(2)-methylguanosine(2069) in 23S rRNA + S-adenosyl-L-homocysteine + H(+). Specifically methylates the guanine in position 2445 (m2G2445) and the guanine in position 2069 (m7G2069) of 23S rRNA. This chain is Ribosomal RNA large subunit methyltransferase K/L, found in Francisella tularensis subsp. novicida (strain U112).